The following is a 208-amino-acid chain: Thymidylate kinase (208 aa).

9–16 (GGEGCGKS) provides a ligand contact to ATP.

The protein belongs to the thymidylate kinase family.

The enzyme catalyses dTMP + ATP = dTDP + ADP. Its function is as follows. Phosphorylation of dTMP to form dTDP in both de novo and salvage pathways of dTTP synthesis. The chain is Thymidylate kinase from Dehalococcoides mccartyi (strain ATCC BAA-2100 / JCM 16839 / KCTC 5957 / BAV1).